A 203-amino-acid chain; its full sequence is Putative 3-methyladenine DNA glycosylase (203 aa).

It belongs to the DNA glycosylase MPG family.

In Desulfitobacterium hafniense (strain Y51), this protein is Putative 3-methyladenine DNA glycosylase.